We begin with the raw amino-acid sequence, 207 residues long: Sodium/potassium-transporting ATPase subunit beta-1-interacting protein 1 (207 aa).

3 helical membrane-spanning segments follow: residues 2–22 (GKCS…VAAL), 35–55 (APIL…FGTV), and 62–82 (LILY…IICF). The N-linked (GlcNAc...) asparagine glycan is linked to Asn-100. The helical transmembrane segment at 147–167 (ALSSALQIFLALFGFVFACYV) threads the bilayer.

Belongs to the NKAIN family. As to quaternary structure, interacts with ATP1B1 C-terminus. Detected in the brain only and specifically in neurons. Expressed in multiple regions such as cerebral cortex, thalamus, hippocampus, olfactory bulb and brainstem as well as in cerebellum with high expression in granular cell layer.

It localises to the cell membrane. The polypeptide is Sodium/potassium-transporting ATPase subunit beta-1-interacting protein 1 (Nkain1) (Mus musculus (Mouse)).